The primary structure comprises 350 residues: Galactokinase (350 aa).

14–17 (EHTD) is a binding site for substrate. ATP contacts are provided by residues serine 46 and 96–102 (GAGLSSS). Mg(2+) is bound by residues serine 102 and glutamate 134. The active-site Proton acceptor is aspartate 146. Residue tyrosine 196 participates in substrate binding.

It belongs to the GHMP kinase family. GalK subfamily.

The protein localises to the cytoplasm. It catalyses the reaction alpha-D-galactose + ATP = alpha-D-galactose 1-phosphate + ADP + H(+). It functions in the pathway carbohydrate metabolism; galactose metabolism. Its function is as follows. Catalyzes the transfer of the gamma-phosphate of ATP to D-galactose to form alpha-D-galactose-1-phosphate (Gal-1-P). This Thermotoga petrophila (strain ATCC BAA-488 / DSM 13995 / JCM 10881 / RKU-1) protein is Galactokinase.